The chain runs to 240 residues: 1-(5-phosphoribosyl)-5-[(5-phosphoribosylamino)methylideneamino] imidazole-4-carboxamide isomerase (240 aa).

The Proton acceptor role is filled by D8. The Proton donor role is filled by D129.

The protein belongs to the HisA/HisF family.

The protein resides in the cytoplasm. It catalyses the reaction 1-(5-phospho-beta-D-ribosyl)-5-[(5-phospho-beta-D-ribosylamino)methylideneamino]imidazole-4-carboxamide = 5-[(5-phospho-1-deoxy-D-ribulos-1-ylimino)methylamino]-1-(5-phospho-beta-D-ribosyl)imidazole-4-carboxamide. Its pathway is amino-acid biosynthesis; L-histidine biosynthesis; L-histidine from 5-phospho-alpha-D-ribose 1-diphosphate: step 4/9. The polypeptide is 1-(5-phosphoribosyl)-5-[(5-phosphoribosylamino)methylideneamino] imidazole-4-carboxamide isomerase (Listeria monocytogenes serotype 4a (strain HCC23)).